Reading from the N-terminus, the 454-residue chain is tRNA modification GTPase MnmE (454 aa).

(6S)-5-formyl-5,6,7,8-tetrahydrofolate is bound by residues R23, E86, and R125. In terms of domain architecture, TrmE-type G spans 221 to 376 (GLTLAIVGRP…LREQILRMVS (156 aa)). N231 contacts K(+). Residues 231–236 (NVGKSS), 250–256 (TAIPGTT), and 275–278 (DTAG) each bind GTP. Residue S235 participates in Mg(2+) binding. T250, I252, and T255 together coordinate K(+). A Mg(2+)-binding site is contributed by T256. (6S)-5-formyl-5,6,7,8-tetrahydrofolate is bound at residue K454.

It belongs to the TRAFAC class TrmE-Era-EngA-EngB-Septin-like GTPase superfamily. TrmE GTPase family. In terms of assembly, homodimer. Heterotetramer of two MnmE and two MnmG subunits. K(+) serves as cofactor.

The protein localises to the cytoplasm. Functionally, exhibits a very high intrinsic GTPase hydrolysis rate. Involved in the addition of a carboxymethylaminomethyl (cmnm) group at the wobble position (U34) of certain tRNAs, forming tRNA-cmnm(5)s(2)U34. The polypeptide is tRNA modification GTPase MnmE (Koribacter versatilis (strain Ellin345)).